The sequence spans 293 residues: MDLGKVITAMVTPIHPEKDKVCKKRIHHLVNHLIENGSDGLVIAGTTGESPTLSHDEKIKLFRQVIETNDGRAKLIAGTGSNNTAETIAFTKEVAELGGIDAVLIVAPYYNKPNQDGLYAHFAAVAEASDLPVVIYNIPGRSVVNIEPETIIRLAALPNIVGVKESSGNLDNISKIIAETSDDFQVYSGDDSLTLPILAVGGNGVISVASHVVGNEMQEMIQAFERGEVQKAAQIHRELLPLMNGLFSVPNPAPTKYLLNQQGISVGPVRLPLVDLNAEQGTKLQAILEGLSK.

Thr-47 is a pyruvate binding site. Tyr-136 (proton donor/acceptor) is an active-site residue. Catalysis depends on Lys-164, which acts as the Schiff-base intermediate with substrate. Ile-206 contacts pyruvate.

Belongs to the DapA family. Homotetramer; dimer of dimers.

The protein resides in the cytoplasm. The enzyme catalyses L-aspartate 4-semialdehyde + pyruvate = (2S,4S)-4-hydroxy-2,3,4,5-tetrahydrodipicolinate + H2O + H(+). Its pathway is amino-acid biosynthesis; L-lysine biosynthesis via DAP pathway; (S)-tetrahydrodipicolinate from L-aspartate: step 3/4. Catalyzes the condensation of (S)-aspartate-beta-semialdehyde [(S)-ASA] and pyruvate to 4-hydroxy-tetrahydrodipicolinate (HTPA). The protein is 4-hydroxy-tetrahydrodipicolinate synthase of Listeria monocytogenes serotype 4a (strain HCC23).